The chain runs to 160 residues: SsrA-binding protein (160 aa).

A disordered region spans residues 133 to 160; it reads KKEHDKREDLKEREWQRDKERMMKNKGR.

Belongs to the SmpB family.

It localises to the cytoplasm. Its function is as follows. Required for rescue of stalled ribosomes mediated by trans-translation. Binds to transfer-messenger RNA (tmRNA), required for stable association of tmRNA with ribosomes. tmRNA and SmpB together mimic tRNA shape, replacing the anticodon stem-loop with SmpB. tmRNA is encoded by the ssrA gene; the 2 termini fold to resemble tRNA(Ala) and it encodes a 'tag peptide', a short internal open reading frame. During trans-translation Ala-aminoacylated tmRNA acts like a tRNA, entering the A-site of stalled ribosomes, displacing the stalled mRNA. The ribosome then switches to translate the ORF on the tmRNA; the nascent peptide is terminated with the 'tag peptide' encoded by the tmRNA and targeted for degradation. The ribosome is freed to recommence translation, which seems to be the essential function of trans-translation. The protein is SsrA-binding protein of Tolumonas auensis (strain DSM 9187 / NBRC 110442 / TA 4).